Reading from the N-terminus, the 97-residue chain is Peptide Y (97 aa).

The first 28 residues, 1-28 (MANMLRSWMMLAALAVCLLVCLSSFADA), serve as a signal peptide directing secretion. A Tyrosine amide modification is found at Y64. The propeptide at 68–97 (STPEQAVAWLLFGADSSQDAEPRLDYSDQW) is C-terminal extension.

This sequence belongs to the NPY family.

The protein resides in the secreted. The polypeptide is Peptide Y (Dicentrarchus labrax (European seabass)).